The sequence spans 299 residues: Ribosomal protein L11 methyltransferase (299 aa).

The S-adenosyl-L-methionine site is built by threonine 139, glycine 166, aspartate 188, and asparagine 231.

It belongs to the methyltransferase superfamily. PrmA family.

It localises to the cytoplasm. The catalysed reaction is L-lysyl-[protein] + 3 S-adenosyl-L-methionine = N(6),N(6),N(6)-trimethyl-L-lysyl-[protein] + 3 S-adenosyl-L-homocysteine + 3 H(+). In terms of biological role, methylates ribosomal protein L11. This Thermosynechococcus vestitus (strain NIES-2133 / IAM M-273 / BP-1) protein is Ribosomal protein L11 methyltransferase.